A 634-amino-acid polypeptide reads, in one-letter code: GTP-binding protein 4 (634 aa).

N-acetylalanine is present on Ala2. Position 103 is an N6-acetyllysine; alternate (Lys103). Residue Lys103 forms a Glycyl lysine isopeptide (Lys-Gly) (interchain with G-Cter in SUMO2); alternate linkage. Phosphoserine is present on Ser122. The region spanning 169-340 (RTLLLCGYPN…VKTEACDRLL (172 aa)) is the OBG-type G domain. Residues 175–182 (GYPNVGKS), 221–225 (DTPGI), and 289–292 (NKCD) each bind GTP. A Glycyl lysine isopeptide (Lys-Gly) (interchain with G-Cter in SUMO2) cross-link involves residue Lys332. A phosphoserine mark is found at Ser468, Ser470, and Ser472. The segment at 494 to 634 (KILQSKEKNK…KRKAGKKDRR (141 aa)) is disordered. Lys534 is covalently cross-linked (Glycyl lysine isopeptide (Lys-Gly) (interchain with G-Cter in SUMO2)). Positions 544–554 (RRSRSVTRKRK) are enriched in basic residues. The residue at position 558 (Ser558) is a Phosphoserine. The span at 560–572 (PPSSTARSRSCSR) shows a compositional bias: low complexity. Basic and acidic residues predominate over residues 573–585 (TPRDVSGLRDVKM). A compositionally biased stretch (basic residues) spans 586–604 (VKKAKTMMKKAQKKMNRLG). The span at 605–618 (KKGEADRHVFDMKP) shows a compositional bias: basic and acidic residues. The span at 619–634 (KHLLSGKRKAGKKDRR) shows a compositional bias: basic residues.

It belongs to the TRAFAC class OBG-HflX-like GTPase superfamily. OBG GTPase family. NOG subfamily. In terms of assembly, associates with pre-60S ribosomal particles. Interacts with MINAS-60 (product of an alternative open reading frame of RBM10). In terms of tissue distribution, ubiquitous.

The protein localises to the nucleus. The protein resides in the nucleolus. Functionally, involved in the biogenesis of the 60S ribosomal subunit. Acts as TP53 repressor, preventing TP53 stabilization and cell cycle arrest. This is GTP-binding protein 4 (Gtpbp4) from Mus musculus (Mouse).